A 136-amino-acid chain; its full sequence is Large ribosomal subunit protein bL19 (136 aa).

Belongs to the bacterial ribosomal protein bL19 family.

In terms of biological role, this protein is located at the 30S-50S ribosomal subunit interface and may play a role in the structure and function of the aminoacyl-tRNA binding site. This chain is Large ribosomal subunit protein bL19, found in Xylella fastidiosa (strain 9a5c).